A 229-amino-acid chain; its full sequence is Ribonuclease 3 (229 aa).

In terms of domain architecture, RNase III spans Leu5 to Gly127. Glu40 lines the Mg(2+) pocket. Residue Asp44 is part of the active site. Mg(2+) is bound by residues Asp113 and Glu116. The active site involves Glu116. In terms of domain architecture, DRBM spans Asp154–Val224.

It belongs to the ribonuclease III family. As to quaternary structure, homodimer. It depends on Mg(2+) as a cofactor.

The protein resides in the cytoplasm. The enzyme catalyses Endonucleolytic cleavage to 5'-phosphomonoester.. Digests double-stranded RNA. Involved in the processing of primary rRNA transcript to yield the immediate precursors to the large and small rRNAs (23S and 16S). Processes some mRNAs, and tRNAs when they are encoded in the rRNA operon. Processes pre-crRNA and tracrRNA of type II CRISPR loci if present in the organism. The polypeptide is Ribonuclease 3 (Pseudomonas aeruginosa (strain LESB58)).